Reading from the N-terminus, the 1059-residue chain is Pleckstrin homology domain-containing family M member 1 (1059 aa).

Positions 40-182 (TSEDGDANTM…LSFELSYKSA (143 aa)) constitute an RUN domain. Phosphoserine is present on S218. Disordered regions lie at residues 218–244 (SLDSISHSSGSEDIEVQHSGHKIRRDR), 272–334 (LQEN…TPMF), and 354–411 (SEEP…DQGS). Composition is skewed to polar residues over residues 313–334 (SKAQVNSAPSSGPSQESDTPMF) and 392–401 (GSTSDQQPSS). Phosphoserine occurs at positions 430, 433, and 488. The PH 1 domain maps to 536–627 (GLMKLGTVAR…WLDRVREALQ (92 aa)). The LIR motif lies at 634–640 (EEEWVNI). Positions 657-1059 (LPPYSALLPE…RKYQEQNTVS (403 aa)) are interaction with RAB7A. In terms of domain architecture, PH 2 spans 686 to 780 (DAIKESLLYL…WRDLVRKVLA (95 aa)). The Phorbol-ester/DAG-type zinc finger occupies 989–1043 (QHVYHCDLCTQRGFICQICHHQDIIFPFEFDTTVRCAECRTVFHQSCQAVVRKGC).

Interacts (via N- and C-terminus) with RAB7A (GTP-bound form). Simultaneously interacts with RAB7A and ARL8B; bringing about clustering and fusion of late endosomes and lysosomes. Interacts (via RUN domain) with ARL8B (GTP-bound form); the interaction is required for PLEKHM1 localization to lysosomes and for ARL8B function in delivery and degradation of endocytic and autophagic cargo in lysosomes. PLEKHM1 and PLEKHM2 compete for interaction with ARL8B. Interacts with ARL8A; the interaction is weaker than with ARL8B. Interacts with VPS41, VPS11, VPS18, VPS33A and VPS39; indicative for an association with the HOPS complex; the interactions with, at least, VPS41, VPS11, VPS18 and VPS33A require ARL8B. Interacts with GABARAP, GABARAPL, GABARAPL2, MAP1LC3A, MAP1LC3B and MAP1LC3C. Interacts with PAFAH1B. Interacts (via N- and C-terminus) with NDEL1. Interacts (via C-terminus) with MAP3K7. Interacts (via N- and C-terminus) with FAM98A. Interacts (via C-terminus) with DEF8; this interaction is weak but increased in a RAB7A-dependent manner. May interact with sialyl-lex-positive protein. Expressed in testis, skeletal muscle, lung, liver, spleen, brain, heart, kidney and bone. Weakly expressed in monocytes (at protein level).

The protein localises to the autolysosome membrane. The protein resides in the endosome membrane. It localises to the late endosome membrane. It is found in the lysosome membrane. Functionally, acts as a multivalent adapter protein that regulates Rab7-dependent and HOPS complex-dependent fusion events in the endolysosomal system and couples autophagic and the endocytic trafficking pathways. Acts as a dual effector of RAB7A and ARL8B that simultaneously binds these GTPases, bringing about clustering and fusion of late endosomes and lysosomes. Required for late stages of endolysosomal maturation, facilitating both endocytosis-mediated degradation of growth factor receptors and autophagosome clearance. Interaction with Arl8b is a crucial factor in the terminal maturation of autophagosomes and to mediate autophagosome-lysosome fusion. Positively regulates lysosome peripheral distribution and ruffled border formation in osteoclasts. May be involved in negative regulation of endocytic transport from early endosome to late endosome/lysosome implicating its association with Rab7. May have a role in sialyl-lex-mediated transduction of apoptotic signals. Involved in bone resorption. The polypeptide is Pleckstrin homology domain-containing family M member 1 (Rattus norvegicus (Rat)).